The following is a 320-amino-acid chain: Ribonuclease Z (320 aa).

Residues histidine 63, histidine 65, aspartate 67, histidine 68, histidine 141, aspartate 212, and histidine 270 each contribute to the Zn(2+) site. Residue aspartate 67 is the Proton acceptor of the active site.

This sequence belongs to the RNase Z family. In terms of assembly, homodimer. Zn(2+) is required as a cofactor.

The enzyme catalyses Endonucleolytic cleavage of RNA, removing extra 3' nucleotides from tRNA precursor, generating 3' termini of tRNAs. A 3'-hydroxy group is left at the tRNA terminus and a 5'-phosphoryl group is left at the trailer molecule.. In terms of biological role, zinc phosphodiesterase, which displays some tRNA 3'-processing endonuclease activity. Probably involved in tRNA maturation, by removing a 3'-trailer from precursor tRNA. The sequence is that of Ribonuclease Z from Lacticaseibacillus casei (strain BL23) (Lactobacillus casei).